Here is a 205-residue protein sequence, read N- to C-terminus: MSRGALIVFEGLDKSGKTTQCMNIMESIPTNTIKYLNFPQRSTVTGKMIDDYLTRKKTYNDHIVNLLFCANRWEFASFIQEQLEQGITLIVDRYAFSGVAYATAKGASMTLSKSYESGLPKPDLVIFLESGSKEINRNVGEEIYEDVAFQQKVLQEYKKMIEEGEDIHWQIISSEFEEDVKKELIKNIVIEAIHTVTGPVGQLWM.

Gly11–Thr18 serves as a coordination point for ATP.

It belongs to the thymidylate kinase family. In terms of assembly, homodimer; the dimer arrangement is orthogonal and not antiparallel as in human enzyme.

The enzyme catalyses dTMP + ATP = dTDP + ADP. Its pathway is pyrimidine metabolism; dTTP biosynthesis. Poxvirus TMP kinase is able to phosphorylate dTMP, dUMP and also dGMP from any purine and pyrimidine nucleoside triphosphate. The large substrate specificity is explained by the presence of a canal connecting the edge of the dimer interface to the TMP base binding pocket, canal not found in the human homolog. The sequence is that of Thymidylate kinase (OPG178) from Homo sapiens (Human).